Here is a 239-residue protein sequence, read N- to C-terminus: Small ribosomal subunit protein uS2 (239 aa).

Belongs to the universal ribosomal protein uS2 family.

This chain is Small ribosomal subunit protein uS2, found in Francisella tularensis subsp. tularensis (strain WY96-3418).